A 376-amino-acid polypeptide reads, in one-letter code: Rhodopsin (376 aa).

Over 1–52 the chain is Extracellular; sequence MSSWSNQPAMDDYGLPSSNPYGNFTVVDMAPKDILHMIHPHWYQYPPMNPMM. N23 carries N-linked (GlcNAc...) asparagine glycosylation. A helical membrane pass occupies residues 53–77; that stretch reads YPLLLIFMLFTGILCLAGNFVTIWV. At 78–89 the chain is on the cytoplasmic side; sequence FMNTKSLRTPAN. The chain crosses the membrane as a helical span at residues 90 to 112; sequence LLVVNLAMSDFLMMFTMFPPMMV. The Extracellular portion of the chain corresponds to 113–126; the sequence is TCYYHTWTLGPTFC. C126 and C203 form a disulfide bridge. A helical membrane pass occupies residues 127–149; sequence QVYAFLGNLCGCASIWTMVFITF. The 'Ionic lock' involved in activated form stabilization signature appears at 150-152; it reads DRY. Residues 150–168 lie on the Cytoplasmic side of the membrane; the sequence is DRYNVIVKGVAGEPLSTKK. Residues 169-189 form a helical membrane-spanning segment; the sequence is ASLWILTIWVLSITWCIAPFF. Residues 190–216 lie on the Extracellular side of the membrane; it reads GWNRYVPEGNLTGCGTDYLSEDILSRS. N199 carries an N-linked (GlcNAc...) asparagine glycan. Residues 217–237 form a helical membrane-spanning segment; sequence YLYDYSTWVYYLPLLPIYCYV. At 238–278 the chain is on the cytoplasmic side; sequence SIIKAVAAHEKGMRDQAKKMGIKSLRNEEAQKTSAECRLAK. The chain crosses the membrane as a helical span at residues 279–300; sequence IAMTTVALWFIAWTPYLLINWV. Residues 301-311 are Extracellular-facing; the sequence is GMFARSYLSPV. The chain crosses the membrane as a helical span at residues 312 to 333; it reads YTIWGYVFAKANAVYNPIVYAI. K321 carries the post-translational modification N6-(retinylidene)lysine. The Cytoplasmic segment spans residues 334–376; that stretch reads SHPKYRAAMEKKLPCLSCKTESDDVSESASTTTSSAEEKAESA. Residues 353–376 form a disordered region; sequence TESDDVSESASTTTSSAEEKAESA.

It belongs to the G-protein coupled receptor 1 family. Opsin subfamily. As to quaternary structure, homodimer. Interacts with GNAQ. In terms of processing, contains one covalently linked retinal chromophore. In terms of tissue distribution, detected on rhabdomere membranes on photoreceptor cells in the retina (at protein level).

The protein localises to the cell projection. Its subcellular location is the rhabdomere membrane. Functionally, photoreceptor required for image-forming vision at low light intensity. Can use both retinal and 3-dehydroretinal as visual pigment. Light-induced isomerization of 11-cis to all-trans retinal triggers a conformational change that activates signaling via G-proteins. Signaling via GNAQ probably mediates the activation of phospholipase C. This Procambarus clarkii (Red swamp crayfish) protein is Rhodopsin (RHO).